We begin with the raw amino-acid sequence, 447 residues long: tRNA-2-methylthio-N(6)-dimethylallyladenosine synthase (447 aa).

The region spanning 3 to 120 (KKLYIKTNGC…LPALLNERLE (118 aa)) is the MTTase N-terminal domain. [4Fe-4S] cluster-binding residues include cysteine 12, cysteine 49, cysteine 83, cysteine 157, cysteine 161, and cysteine 164. Positions 143-375 (RAEGPTAFVS…QNRLLMNAAR (233 aa)) constitute a Radical SAM core domain. The region spanning 378–441 (ESMIGSKQKI…PNSLRGRLLE (64 aa)) is the TRAM domain.

Belongs to the methylthiotransferase family. MiaB subfamily. Monomer. It depends on [4Fe-4S] cluster as a cofactor.

It is found in the cytoplasm. The enzyme catalyses N(6)-dimethylallyladenosine(37) in tRNA + (sulfur carrier)-SH + AH2 + 2 S-adenosyl-L-methionine = 2-methylsulfanyl-N(6)-dimethylallyladenosine(37) in tRNA + (sulfur carrier)-H + 5'-deoxyadenosine + L-methionine + A + S-adenosyl-L-homocysteine + 2 H(+). Catalyzes the methylthiolation of N6-(dimethylallyl)adenosine (i(6)A), leading to the formation of 2-methylthio-N6-(dimethylallyl)adenosine (ms(2)i(6)A) at position 37 in tRNAs that read codons beginning with uridine. In Legionella pneumophila (strain Paris), this protein is tRNA-2-methylthio-N(6)-dimethylallyladenosine synthase.